The primary structure comprises 154 residues: Ascorbate-specific PTS system EIIA component (154 aa).

One can recognise a PTS EIIA type-2 domain in the interval 6–150; the sequence is SLAENNSIRL…QEVLDLIDRT (145 aa). Catalysis depends on His68, which acts as the Tele-phosphohistidine intermediate. A Phosphohistidine modification is found at His68.

It localises to the cytoplasm. Functionally, the phosphoenolpyruvate-dependent sugar phosphotransferase system (sugar PTS), a major carbohydrate active transport system, catalyzes the phosphorylation of incoming sugar substrates concomitantly with their translocation across the cell membrane. The enzyme II UlaABC PTS system is involved in ascorbate transport. This chain is Ascorbate-specific PTS system EIIA component (ulaC), found in Salmonella paratyphi A (strain ATCC 9150 / SARB42).